The primary structure comprises 175 residues: Co-chaperone protein HscB homolog (175 aa).

The region spanning 7–79 is the J domain; sequence SHFDLFHLPA…LQRASYLLSL (73 aa).

The protein belongs to the HscB family. In terms of assembly, interacts with HscA and stimulates its ATPase activity.

Functionally, co-chaperone involved in the maturation of iron-sulfur cluster-containing proteins. Seems to help targeting proteins to be folded toward HscA. This is Co-chaperone protein HscB homolog from Burkholderia vietnamiensis (strain G4 / LMG 22486) (Burkholderia cepacia (strain R1808)).